A 358-amino-acid polypeptide reads, in one-letter code: Glutamate 5-kinase (358 aa).

Residue Lys9 participates in ATP binding. Ser49, Asp136, and Asn148 together coordinate substrate. ATP contacts are provided by residues 168–169 and 210–216; these read TD and TGGMTTK. The region spanning 275 to 353 is the PUA domain; it reads DAAVEVDAGA…RAEGVLIHRN (79 aa).

This sequence belongs to the glutamate 5-kinase family.

It localises to the cytoplasm. The enzyme catalyses L-glutamate + ATP = L-glutamyl 5-phosphate + ADP. It participates in amino-acid biosynthesis; L-proline biosynthesis; L-glutamate 5-semialdehyde from L-glutamate: step 1/2. Its function is as follows. Catalyzes the transfer of a phosphate group to glutamate to form L-glutamate 5-phosphate. The protein is Glutamate 5-kinase of Streptococcus suis (strain 05ZYH33).